The primary structure comprises 209 residues: Inorganic pyrophosphatase (209 aa).

Positions 38, 52, and 64 each coordinate substrate. Positions 92, 97, and 130 each coordinate Mg(2+). Tyrosine 167 lines the substrate pocket.

This sequence belongs to the PPase family. In terms of assembly, homohexamer. Mg(2+) serves as cofactor.

It localises to the cytoplasm. It carries out the reaction diphosphate + H2O = 2 phosphate + H(+). Functionally, catalyzes the hydrolysis of inorganic pyrophosphate (PPi) forming two phosphate ions. The polypeptide is Inorganic pyrophosphatase (Chlamydia muridarum (strain MoPn / Nigg)).